The chain runs to 173 residues: ATP synthase subunit b (173 aa).

A helical membrane pass occupies residues 15 to 35 (GVEWGTVIVQVLTFIVLLALL).

This sequence belongs to the ATPase B chain family. F-type ATPases have 2 components, F(1) - the catalytic core - and F(0) - the membrane proton channel. F(1) has five subunits: alpha(3), beta(3), gamma(1), delta(1), epsilon(1). F(0) has three main subunits: a(1), b(2) and c(10-14). The alpha and beta chains form an alternating ring which encloses part of the gamma chain. F(1) is attached to F(0) by a central stalk formed by the gamma and epsilon chains, while a peripheral stalk is formed by the delta and b chains.

The protein localises to the cell membrane. Its function is as follows. F(1)F(0) ATP synthase produces ATP from ADP in the presence of a proton or sodium gradient. F-type ATPases consist of two structural domains, F(1) containing the extramembraneous catalytic core and F(0) containing the membrane proton channel, linked together by a central stalk and a peripheral stalk. During catalysis, ATP synthesis in the catalytic domain of F(1) is coupled via a rotary mechanism of the central stalk subunits to proton translocation. Functionally, component of the F(0) channel, it forms part of the peripheral stalk, linking F(1) to F(0). This chain is ATP synthase subunit b, found in Staphylococcus aureus (strain MSSA476).